The primary structure comprises 331 residues: Pyruvate synthase subunit PorB (331 aa).

[4Fe-4S] cluster is bound by residues Cys21, Cys24, Cys59, and Cys222.

In terms of assembly, heterotetramer of one alpha, one beta, one delta and one gamma chain. [4Fe-4S] cluster serves as cofactor.

The enzyme catalyses 2 oxidized [2Fe-2S]-[ferredoxin] + pyruvate + CoA = 2 reduced [2Fe-2S]-[ferredoxin] + acetyl-CoA + CO2 + H(+). The chain is Pyruvate synthase subunit PorB (porB) from Pyrococcus horikoshii (strain ATCC 700860 / DSM 12428 / JCM 9974 / NBRC 100139 / OT-3).